We begin with the raw amino-acid sequence, 149 residues long: 3-hydroxyacyl-[acyl-carrier-protein] dehydratase FabZ (149 aa).

Histidine 52 is a catalytic residue.

It belongs to the thioester dehydratase family. FabZ subfamily.

The protein resides in the cytoplasm. It carries out the reaction a (3R)-hydroxyacyl-[ACP] = a (2E)-enoyl-[ACP] + H2O. In terms of biological role, involved in unsaturated fatty acids biosynthesis. Catalyzes the dehydration of short chain beta-hydroxyacyl-ACPs and long chain saturated and unsaturated beta-hydroxyacyl-ACPs. In Cupriavidus necator (strain ATCC 17699 / DSM 428 / KCTC 22496 / NCIMB 10442 / H16 / Stanier 337) (Ralstonia eutropha), this protein is 3-hydroxyacyl-[acyl-carrier-protein] dehydratase FabZ.